A 187-amino-acid chain; its full sequence is MTQLKNPVLMATIGAAQGLRGEVRVKSFTDDPAALGDYGNLHSEDGRVFEVLEIREAKNVVVVRFRGINDRTAAEALNGLELFIERDNLPDDDLDEDEFFYADLEGLEAVDRTGKSYGSVTGVFDFGAGDLLELKGPGLRPVLIPFTEWSVLEIDLEAGKLVIDPTAAGLVDDEKSGPGKPFPTKRK.

A PRC barrel domain is found at 96 to 169 (EDEFFYADLE…KLVIDPTAAG (74 aa)).

It belongs to the RimM family. In terms of assembly, binds ribosomal protein uS19.

It is found in the cytoplasm. Functionally, an accessory protein needed during the final step in the assembly of 30S ribosomal subunit, possibly for assembly of the head region. Essential for efficient processing of 16S rRNA. May be needed both before and after RbfA during the maturation of 16S rRNA. It has affinity for free ribosomal 30S subunits but not for 70S ribosomes. This is Ribosome maturation factor RimM from Rhizobium meliloti (strain 1021) (Ensifer meliloti).